The sequence spans 338 residues: Glycerol-3-phosphate dehydrogenase [NAD(P)+] (338 aa).

NADPH is bound by residues W14, Y50, and K110. 3 residues coordinate sn-glycerol 3-phosphate: K110, G141, and S143. A145 is an NADPH binding site. Positions 196, 249, 259, 260, and 261 each coordinate sn-glycerol 3-phosphate. K196 functions as the Proton acceptor in the catalytic mechanism. R260 provides a ligand contact to NADPH. E285 contacts NADPH.

This sequence belongs to the NAD-dependent glycerol-3-phosphate dehydrogenase family.

The protein resides in the cytoplasm. It catalyses the reaction sn-glycerol 3-phosphate + NAD(+) = dihydroxyacetone phosphate + NADH + H(+). The catalysed reaction is sn-glycerol 3-phosphate + NADP(+) = dihydroxyacetone phosphate + NADPH + H(+). It functions in the pathway membrane lipid metabolism; glycerophospholipid metabolism. Catalyzes the reduction of the glycolytic intermediate dihydroxyacetone phosphate (DHAP) to sn-glycerol 3-phosphate (G3P), the key precursor for phospholipid synthesis. In Malacoplasma penetrans (strain HF-2) (Mycoplasma penetrans), this protein is Glycerol-3-phosphate dehydrogenase [NAD(P)+].